The sequence spans 389 residues: Succinate--CoA ligase [ADP-forming] subunit beta (389 aa).

An ATP-grasp domain is found at 9-244 (KQILRKYGIP…PSQMSNNEAR (236 aa)). ATP contacts are provided by residues K46, 53-55 (GRG), I102, and E107. Positions 199 and 213 each coordinate Mg(2+). Residues N264 and 321 to 323 (GIM) contribute to the substrate site.

It belongs to the succinate/malate CoA ligase beta subunit family. As to quaternary structure, heterotetramer of two alpha and two beta subunits. It depends on Mg(2+) as a cofactor.

It catalyses the reaction succinate + ATP + CoA = succinyl-CoA + ADP + phosphate. It carries out the reaction GTP + succinate + CoA = succinyl-CoA + GDP + phosphate. The protein operates within carbohydrate metabolism; tricarboxylic acid cycle; succinate from succinyl-CoA (ligase route): step 1/1. Its function is as follows. Succinyl-CoA synthetase functions in the citric acid cycle (TCA), coupling the hydrolysis of succinyl-CoA to the synthesis of either ATP or GTP and thus represents the only step of substrate-level phosphorylation in the TCA. The beta subunit provides nucleotide specificity of the enzyme and binds the substrate succinate, while the binding sites for coenzyme A and phosphate are found in the alpha subunit. The polypeptide is Succinate--CoA ligase [ADP-forming] subunit beta (Protochlamydia amoebophila (strain UWE25)).